A 92-amino-acid polypeptide reads, in one-letter code: YcgL domain-containing protein Shewana3_2381 (92 aa).

Positions 1 to 85 (MLCAVYKSSR…PQVNLLAEHR (85 aa)) constitute a YcgL domain.

The chain is YcgL domain-containing protein Shewana3_2381 from Shewanella sp. (strain ANA-3).